Here is a 714-residue protein sequence, read N- to C-terminus: Mitochondrial potassium channel ATP-binding subunit (714 aa).

A mitochondrion-targeting transit peptide spans 1-25; that stretch reads MLVHLFRVGIRGGPVPRWSLQSLRF. Transmembrane regions (helical) follow at residues 127-147, 178-198, 278-298, and 365-385; these read LLAL…NVQI, IQLL…LVLL, LMLA…GSGL, and NIAF…LVAG. The 288-residue stretch at 132 to 419 folds into the ABC transmembrane type-1 domain; sequence LAIVLALGAA…LSVLFGQVVR (288 aa). One can recognise an ABC transporter domain in the interval 454 to 691; the sequence is ITFQNVSFSY…GGLYAELIRR (238 aa). ATP is bound at residue 489–496; the sequence is GQSGGGKT.

It belongs to the ABC transporter superfamily. ABCB family. Multidrug resistance exporter (TC 3.A.1.201) subfamily. The mitochondrial potassium channel (mitoK(ATP)) is composed of 4 subunits of CCDC51/MITOK and 4 subunits of ABCB8/MITOSUR. Physically interacts with PAAT. Interacts with Neuropilin-1 (NRP1) in mitochondria. As to expression, strong expression is found in the heart, brain and testis. In the testis, expressed both in the somatic Sertoli cells and peritubular cells and in the germline (spermatogonia and pachytene spermatocytes). Also expressed in the lung, liver, intestine and kidney.

It is found in the mitochondrion inner membrane. Its activity is regulated as follows. Channel activity inhibited by ATP via ABCB8/MITOSUR subunit. In terms of biological role, ATP-binding subunit of the mitochondrial ATP-gated potassium channel (mitoK(ATP)). v. An increase in ATP intracellular levels closes the channel, inhibiting K(+) transport, whereas a decrease in ATP levels enhances K(+) uptake in the mitochondrial matrix. Plays a role in mitochondrial iron transport. Required for maintenance of normal cardiac function, possibly by influencing mitochondrial iron export and regulating the maturation of cytosolic iron sulfur cluster-containing enzymes. This chain is Mitochondrial potassium channel ATP-binding subunit, found in Rattus norvegicus (Rat).